The primary structure comprises 957 residues: Glycine dehydrogenase (decarboxylating) 2 (957 aa).

The residue at position 707 (lysine 707) is an N6-(pyridoxal phosphate)lysine.

The protein belongs to the GcvP family. The glycine cleavage system is composed of four proteins: P, T, L and H. Pyridoxal 5'-phosphate serves as cofactor.

It catalyses the reaction N(6)-[(R)-lipoyl]-L-lysyl-[glycine-cleavage complex H protein] + glycine + H(+) = N(6)-[(R)-S(8)-aminomethyldihydrolipoyl]-L-lysyl-[glycine-cleavage complex H protein] + CO2. Functionally, the glycine cleavage system catalyzes the degradation of glycine. The P protein binds the alpha-amino group of glycine through its pyridoxal phosphate cofactor; CO(2) is released and the remaining methylamine moiety is then transferred to the lipoamide cofactor of the H protein. This chain is Glycine dehydrogenase (decarboxylating) 2 (gcvP2), found in Pseudomonas putida (strain ATCC 47054 / DSM 6125 / CFBP 8728 / NCIMB 11950 / KT2440).